Consider the following 354-residue polypeptide: Protein OVEREXPRESSOR OF CATIONIC PEROXIDASE 3 (354 aa).

Positions 63–70 match the Nuclear localization signal 1 motif; that stretch reads NRKGFVSS. 2 disordered regions span residues 65-98 and 151-186; these read KGFV…EDPF and TGDV…PTKL. The segment covering 154–181 has biased composition (acidic residues); that stretch reads VDVDVDNDDDDNDDDDNDDDDDDSEEDE. A Nuclear localization signal 2 motif is present at residues 191 to 198; the sequence is LKRLAYAL. The disordered stretch occupies residues 243-264; that stretch reads KPPVAAPENSSPDPSPVESLSA. The homeobox DNA-binding region spans 286-345; sequence RWSAQKRVKKAHIETLEKVYRRSKRPTNAVVSSIVQVTNLPRKRVLKWFEDKRAEDGVPD. The short motif at 293–300 is the Nuclear localization signal 3 element; it reads VKKAHIET.

The protein localises to the nucleus. May modulate chromatin structure by regulation of nucleosome assembly/disassembly. Homeodomain transcription factor that mediates jasmonic acid (JA)-mediated COI1-dependent and abscisic acid (ABA)-mediated PMR4-dependent resistance to infection by necrotrophic fungal pathogens (e.g. B.cinerea and P.cucumerina) and bacterial pathogens (e.g. P.syringae DC3000); this resistance involves at least callose deposition. Required for the P.fluorescens WCS417r-triggered JA-dependent induced systemic resistance (ISR) against both P.syringae DC3000 and H.arabidopsidis. Negative regulator of the ABA-dependent drought resistance. This chain is Protein OVEREXPRESSOR OF CATIONIC PEROXIDASE 3, found in Arabidopsis thaliana (Mouse-ear cress).